A 444-amino-acid chain; its full sequence is Na(+)/H(+) antiporter NhaA (444 aa).

11 consecutive transmembrane segments (helical) span residues 27–47, 72–92, 108–128, 136–156, 167–187, 190–210, 212–232, 312–332, 349–369, 385–405, and 419–439; these read TTGL…NSPL, IHHW…GLEI, MLPI…YYAI, AGWG…LVLL, FLVA…ALFY, EINM…VSFN, FGIH…LFML, HLPV…GVSI, VMAG…YLAI, VFGV…IAEL, and IGIL…LRFI.

The protein belongs to the NhaA Na(+)/H(+) (TC 2.A.33) antiporter family.

The protein localises to the cell inner membrane. The enzyme catalyses Na(+)(in) + 2 H(+)(out) = Na(+)(out) + 2 H(+)(in). Na(+)/H(+) antiporter that extrudes sodium in exchange for external protons. The sequence is that of Na(+)/H(+) antiporter NhaA from Sulfurimonas denitrificans (strain ATCC 33889 / DSM 1251) (Thiomicrospira denitrificans (strain ATCC 33889 / DSM 1251)).